Reading from the N-terminus, the 816-residue chain is Leucine--tRNA ligase (816 aa).

Residues 40–51 carry the 'HIGH' region motif; that stretch reads SYPSGSQLHAGH. Positions 576-580 match the 'KMSKS' region motif; it reads KMSKS. Position 579 (Lys-579) interacts with ATP.

Belongs to the class-I aminoacyl-tRNA synthetase family.

It localises to the cytoplasm. The catalysed reaction is tRNA(Leu) + L-leucine + ATP = L-leucyl-tRNA(Leu) + AMP + diphosphate. This is Leucine--tRNA ligase from Clostridium perfringens (strain 13 / Type A).